A 584-amino-acid polypeptide reads, in one-letter code: Eukaryotic translation initiation factor 3 subunit D (584 aa).

The disordered stretch occupies residues 118–184 (IFTRGRGQRG…KDYDKPQRNR (67 aa)). Residues 127–167 (GRGGQDTRGGGRQQFQRGGRGGQQYGGGGYSDRGGGRGGGA) show a composition bias toward gly residues. Residues 173–184 (GWKDYDKPQRNR) show a composition bias toward basic and acidic residues. The tract at residues 312–326 (ALDMVTVNENAADAP) is RNA gate. Positions 563-584 (PANGLDDDDEGPEPEGVAEEED) are disordered. A compositionally biased stretch (acidic residues) spans 567–584 (LDDDDEGPEPEGVAEEED).

It belongs to the eIF-3 subunit D family. Component of the eukaryotic translation initiation factor 3 (eIF-3) complex.

The protein localises to the cytoplasm. MRNA cap-binding component of the eukaryotic translation initiation factor 3 (eIF-3) complex, which is involved in protein synthesis of a specialized repertoire of mRNAs and, together with other initiation factors, stimulates binding of mRNA and methionyl-tRNAi to the 40S ribosome. The eIF-3 complex specifically targets and initiates translation of a subset of mRNAs involved in cell proliferation. In the eIF-3 complex, eif3d specifically recognizes and binds the 7-methylguanosine cap of a subset of mRNAs. The protein is Eukaryotic translation initiation factor 3 subunit D of Chaetomium globosum (strain ATCC 6205 / CBS 148.51 / DSM 1962 / NBRC 6347 / NRRL 1970) (Soil fungus).